A 245-amino-acid polypeptide reads, in one-letter code: Putative binding protein HI_1525 (245 aa).

Positions 1–19 (MKKLVAVTSMILTTFSVQA) are cleaved as a signal peptide. Residues serine 56 and valine 163 each contribute to the molybdate site.

Belongs to the bacterial solute-binding protein ModA family.

The protein localises to the periplasm. Its function is as follows. Probably involved in the binding-dependent system. This is Putative binding protein HI_1525 from Haemophilus influenzae (strain ATCC 51907 / DSM 11121 / KW20 / Rd).